The chain runs to 446 residues: 3-phosphoshikimate 1-carboxyvinyltransferase (446 aa).

3-phosphoshikimate is bound by residues Lys21, Ser22, and Arg26. Lys21 is a phosphoenolpyruvate binding site. Positions 94 and 122 each coordinate phosphoenolpyruvate. Residues Ser167, Gln169, Asp315, and Lys342 each contribute to the 3-phosphoshikimate site. Gln169 serves as a coordination point for phosphoenolpyruvate. Asp315 (proton acceptor) is an active-site residue. The phosphoenolpyruvate site is built by Arg346 and Arg388.

This sequence belongs to the EPSP synthase family. In terms of assembly, monomer.

It localises to the cytoplasm. The catalysed reaction is 3-phosphoshikimate + phosphoenolpyruvate = 5-O-(1-carboxyvinyl)-3-phosphoshikimate + phosphate. The protein operates within metabolic intermediate biosynthesis; chorismate biosynthesis; chorismate from D-erythrose 4-phosphate and phosphoenolpyruvate: step 6/7. Its function is as follows. Catalyzes the transfer of the enolpyruvyl moiety of phosphoenolpyruvate (PEP) to the 5-hydroxyl of shikimate-3-phosphate (S3P) to produce enolpyruvyl shikimate-3-phosphate and inorganic phosphate. The sequence is that of 3-phosphoshikimate 1-carboxyvinyltransferase from Alkalilimnicola ehrlichii (strain ATCC BAA-1101 / DSM 17681 / MLHE-1).